Consider the following 543-residue polypeptide: Telomerase Cajal body protein 1 homolog (543 aa).

Positions 95–128 are disordered; it reads GRPKNAVESPHAGVPMETSLAAEEEANGDEEEES. A compositionally biased stretch (acidic residues) spans 116–127; that stretch reads AEEEANGDEEEE. WD repeat units follow at residues 237-283, 291-329, and 378-421; these read PEGG…LRCS, DEVM…RFCD, and GHKG…QPLV.

It belongs to the TCAB1 family.

Its subcellular location is the nucleus. The protein localises to the cajal body. In terms of biological role, RNA chaperone that plays a key role in Cajal body formation. Specifically recognizes and binds the Cajal body box (CAB box) present in both small Cajal body RNAs (scaRNAs). Probably acts by mediating localization of scaRNAs to Cajal bodies. The polypeptide is Telomerase Cajal body protein 1 homolog (Drosophila melanogaster (Fruit fly)).